The chain runs to 397 residues: S-adenosylmethionine synthase (397 aa).

Histidine 16 is an ATP binding site. Position 18 (aspartate 18) interacts with Mg(2+). Residue glutamate 44 participates in K(+) binding. Residues glutamate 57 and glutamine 100 each coordinate L-methionine. Positions 100-110 (QSPDIAQGVNE) are flexible loop. Residues 175–177 (DAK), 242–243 (RF), aspartate 251, 257–258 (RK), alanine 274, and lysine 278 each bind ATP. Aspartate 251 serves as a coordination point for L-methionine. Lysine 282 contributes to the L-methionine binding site.

The protein belongs to the AdoMet synthase family. As to quaternary structure, homotetramer; dimer of dimers. Requires Mg(2+) as cofactor. K(+) is required as a cofactor.

It localises to the cytoplasm. The catalysed reaction is L-methionine + ATP + H2O = S-adenosyl-L-methionine + phosphate + diphosphate. Its pathway is amino-acid biosynthesis; S-adenosyl-L-methionine biosynthesis; S-adenosyl-L-methionine from L-methionine: step 1/1. Its function is as follows. Catalyzes the formation of S-adenosylmethionine (AdoMet) from methionine and ATP. The overall synthetic reaction is composed of two sequential steps, AdoMet formation and the subsequent tripolyphosphate hydrolysis which occurs prior to release of AdoMet from the enzyme. This chain is S-adenosylmethionine synthase, found in Streptococcus thermophilus (strain ATCC BAA-250 / LMG 18311).